Reading from the N-terminus, the 355-residue chain is METPDTTENYDMITEFDYGDATPCHKVNERAILAQLLPPLYSLVFVIGVVGNLLVVLVLVQYKRLKNMTNIYLLNLAISDLLFLFTLPFLIYYKSTDDWIFGDAMCKILSGFYYTGLYSEIFFIILLTIDRYLAIVHAVFALRARTVTFGVITSIIIWALAILASSPLMYFSKTQWNIVRHSCNLHFPYESFQQWKLFQALKLNLFGLVLPLLVMIVCYTGIIKILLRRPNEKKSKAVRLIFVIMIIFFLFWTPYNLTELISVFQEFLFTHLCEQNRQLDLAMEVTEVIANMHCCVNPVIYAFAGERFRKYLRQLFHRRVAVHLVKWLPFLSGDRLERVSSTSPSTGEHELSAGL.

At 1–34 (METPDTTENYDMITEFDYGDATPCHKVNERAILA) the chain is on the extracellular side. The helical transmembrane segment at 35–60 (QLLPPLYSLVFVIGVVGNLLVVLVLV) threads the bilayer. At 61–64 (QYKR) the chain is on the cytoplasmic side. A helical transmembrane segment spans residues 65–91 (LKNMTNIYLLNLAISDLLFLFTLPFLI). At 92 to 107 (YYKSTDDWIFGDAMCK) the chain is on the extracellular side. A disulfide bridge links Cys106 with Cys183. Residues 108–129 (ILSGFYYTGLYSEIFFIILLTI) form a helical membrane-spanning segment. Over 130 to 146 (DRYLAIVHAVFALRART) the chain is Cytoplasmic. Residues 147-171 (VTFGVITSIIIWALAILASSPLMYF) traverse the membrane as a helical segment. The Extracellular segment spans residues 172–197 (SKTQWNIVRHSCNLHFPYESFQQWKL). The helical transmembrane segment at 198–223 (FQALKLNLFGLVLPLLVMIVCYTGII) threads the bilayer. At 224–239 (KILLRRPNEKKSKAVR) the chain is on the cytoplasmic side. Residues 240 to 264 (LIFVIMIIFFLFWTPYNLTELISVF) traverse the membrane as a helical segment. The Extracellular portion of the chain corresponds to 265 to 281 (QEFLFTHLCEQNRQLDL). The helical transmembrane segment at 282–305 (AMEVTEVIANMHCCVNPVIYAFAG) threads the bilayer. Residues 306 to 355 (ERFRKYLRQLFHRRVAVHLVKWLPFLSGDRLERVSSTSPSTGEHELSAGL) lie on the Cytoplasmic side of the membrane.

The protein belongs to the G-protein coupled receptor 1 family. In terms of assembly, interacts with CREB3. Interacts with CCL3. Interacts with CCL15. Interacts with CCL23. Interacts with GNAI1. Interacts with PF4/CXCL4.

It is found in the cell membrane. In terms of biological role, chemokine receptor that plays a crucial role in regulating immune cell migration, inflammation, and immune responses. Contributes to the inflammatory response by recruiting immune cells, such as monocytes, macrophages, T-cells, and dendritic cells, to sites of inflammation for the clearance of pathogens and the resolution of tissue damage. When activated by its ligands including CCL3, CCL5-9, CCL13-16 and CCL23, triggers a signaling cascade within immune cells, leading to their migration towards the source of the chemokine. For example, mediates neutrophil migration after activation by CCL3 leading to the sequential release of TNF-alpha and leukotriene B4. Also mediates monocyte migration upon CXCL4 binding. Activation by CCL5 results in neuroinflammation through the ERK1/2 signaling pathway. In Macaca fascicularis (Crab-eating macaque), this protein is C-C chemokine receptor type 1 (CCR1).